Here is a 518-residue protein sequence, read N- to C-terminus: MSKSHNDKEESPDNYYFQRREQMQELQSLGINVYPHKFYFNNTFQDVFTAAETCSSNEKTNISVELVGRVIRARIHSMTNFYDVKKDNDELQIVYNKNLQGKENPIAIKIVDCIRRGDIIGFKGIVGRTKTGEISVFAHEIQILSPCLRAFPSEKNLITNPELIYRHRHIDLLVNQDSRNRFITRSKIIQHIREYFNKIGFLEVETPIMNNKVGGASARPFLTHHNELKIDLYLRVAPELFLKQLVVGGLERVFEIGKNFRNEGIDLTHNPEFTAIEFYMAYADYNDLMCIVEELLSGLVKLIKGSSKFIYQPCKRETIDEIKVPLDFSTPFKRIDILEELNKSLNIELTGENIEKPETLELLIKKAEELNIIVNNPKTLNRMLDAFIGEYIEPQCINPTFVTGFPICMSPLAKDHRSKAGITERFEMFCNGKELVNAYTELNIPDLQRKRFLMQDADANAGDDEAMPNDEDFCQVLEYGLPPTGGCGIGIDRLVMYLTDAANIRDVILFPTLKPEQK.

The protein belongs to the class-II aminoacyl-tRNA synthetase family. In terms of assembly, homodimer.

The protein resides in the cytoplasm. It catalyses the reaction tRNA(Lys) + L-lysine + ATP = L-lysyl-tRNA(Lys) + AMP + diphosphate. This is Probable lysine--tRNA ligase, cytoplasmic from Enterocytozoon bieneusi (strain H348) (Microsporidian parasite).